Reading from the N-terminus, the 178-residue chain is Large ribosomal subunit protein bL25 (178 aa).

It belongs to the bacterial ribosomal protein bL25 family. CTC subfamily. Part of the 50S ribosomal subunit; part of the 5S rRNA/L5/L18/L25 subcomplex. Contacts the 5S rRNA. Binds to the 5S rRNA independently of L5 and L18.

In terms of biological role, this is one of the proteins that binds to the 5S RNA in the ribosome where it forms part of the central protuberance. The polypeptide is Large ribosomal subunit protein bL25 (Campylobacter jejuni subsp. jejuni serotype O:23/36 (strain 81-176)).